The following is a 595-amino-acid chain: NADH-quinone oxidoreductase subunit C/D (595 aa).

Residues 1-185 (MNKNICLSAS…NPFVLTKEKE (185 aa)) form an NADH dehydrogenase I subunit C region. Residues 209-595 (DFMFLNFGPN…IDFVMSDVDR (387 aa)) are NADH dehydrogenase I subunit D.

In the N-terminal section; belongs to the complex I 30 kDa subunit family. It in the C-terminal section; belongs to the complex I 49 kDa subunit family. As to quaternary structure, NDH-1 is composed of 13 different subunits. Subunits NuoB, CD, E, F, and G constitute the peripheral sector of the complex.

It is found in the cell inner membrane. The enzyme catalyses a quinone + NADH + 5 H(+)(in) = a quinol + NAD(+) + 4 H(+)(out). NDH-1 shuttles electrons from NADH, via FMN and iron-sulfur (Fe-S) centers, to quinones in the respiratory chain. The immediate electron acceptor for the enzyme in this species is believed to be ubiquinone. Couples the redox reaction to proton translocation (for every two electrons transferred, four hydrogen ions are translocated across the cytoplasmic membrane), and thus conserves the redox energy in a proton gradient. The protein is NADH-quinone oxidoreductase subunit C/D of Baumannia cicadellinicola subsp. Homalodisca coagulata.